The sequence spans 344 residues: Protein YRO2 (344 aa).

At 1–34 (MSDYVELLKRGGNEAIKINPPTGADFHITSRGSD) the chain is on the extracellular side. A helical membrane pass occupies residues 35–55 (WLFTVFCVNLLFGVILVPLMF). At 56–62 (RKPVKDR) the chain is on the cytoplasmic side. Residues 63–83 (FVYYTAIAPNLFMSIAYFTMA) form a helical membrane-spanning segment. Over 84-119 (SNLGWIPVRAKYNHVQTSTQKEHPGYRQIFYARYVG) the chain is Extracellular. The chain crosses the membrane as a helical span at residues 120 to 140 (WFLAFPWPIIQMSLLGGTPLW). A topological domain (cytoplasmic) is located at residue glutamine 141. Residues 142 to 162 (IAFNVGMTEIFTVCWLIAACV) form a helical membrane-spanning segment. Residues 163–172 (HSTYKWGYYT) are Extracellular-facing. A helical transmembrane segment spans residues 173-193 (IGIGAAIVVCISLMTTTFNLV). The Cytoplasmic portion of the chain corresponds to 194–202 (KARGKDVSN). A helical transmembrane segment spans residues 203–223 (VFITFMSVIMFLWLIAYPTCF). At 224–238 (GITDGGNVLQPDSAT) the chain is on the extracellular side. A helical membrane pass occupies residues 239 to 259 (IFYGIIDLLILSILPVLFMPL). Topologically, residues 260–344 (ANYLGIERLG…EEEDVATDSE (85 aa)) are cytoplasmic. The disordered stretch occupies residues 282 to 344 (PVAEKKMPSP…EEEDVATDSE (63 aa)). Lysine 286 participates in a covalent cross-link: Glycyl lysine isopeptide (Lys-Gly) (interchain with G-Cter in ubiquitin). Serine 293 carries the phosphoserine modification. Basic and acidic residues predominate over residues 297-306 (SDSDSSIKEK). A compositionally biased stretch (basic residues) spans 307-330 (LKLKKKHKKDKKKAKKAKKAKKAK). Residues 334–344 (EEEEDVATDSE) are compositionally biased toward acidic residues. A Phosphothreonine modification is found at threonine 341. Serine 343 is modified (phosphoserine).

It belongs to the archaeal/bacterial/fungal opsin family.

Its subcellular location is the membrane. The chain is Protein YRO2 (YRO2) from Saccharomyces cerevisiae (strain ATCC 204508 / S288c) (Baker's yeast).